The chain runs to 138 residues: Transcription antitermination protein NusB (138 aa).

It belongs to the NusB family.

Involved in transcription antitermination. Required for transcription of ribosomal RNA (rRNA) genes. Binds specifically to the boxA antiterminator sequence of the ribosomal RNA (rrn) operons. In Limosilactobacillus reuteri (strain DSM 20016) (Lactobacillus reuteri), this protein is Transcription antitermination protein NusB.